We begin with the raw amino-acid sequence, 229 residues long: Putative N-acetylmannosamine-6-phosphate 2-epimerase (229 aa).

It belongs to the NanE family.

It carries out the reaction an N-acyl-D-glucosamine 6-phosphate = an N-acyl-D-mannosamine 6-phosphate. It participates in amino-sugar metabolism; N-acetylneuraminate degradation; D-fructose 6-phosphate from N-acetylneuraminate: step 3/5. Functionally, converts N-acetylmannosamine-6-phosphate (ManNAc-6-P) to N-acetylglucosamine-6-phosphate (GlcNAc-6-P). The chain is Putative N-acetylmannosamine-6-phosphate 2-epimerase from Haemophilus ducreyi (strain 35000HP / ATCC 700724).